Here is a 100-residue protein sequence, read N- to C-terminus: Aspartyl/glutamyl-tRNA(Asn/Gln) amidotransferase subunit C (100 aa).

The protein belongs to the GatC family. As to quaternary structure, heterotrimer of A, B and C subunits.

It carries out the reaction L-glutamyl-tRNA(Gln) + L-glutamine + ATP + H2O = L-glutaminyl-tRNA(Gln) + L-glutamate + ADP + phosphate + H(+). The enzyme catalyses L-aspartyl-tRNA(Asn) + L-glutamine + ATP + H2O = L-asparaginyl-tRNA(Asn) + L-glutamate + ADP + phosphate + 2 H(+). Allows the formation of correctly charged Asn-tRNA(Asn) or Gln-tRNA(Gln) through the transamidation of misacylated Asp-tRNA(Asn) or Glu-tRNA(Gln) in organisms which lack either or both of asparaginyl-tRNA or glutaminyl-tRNA synthetases. The reaction takes place in the presence of glutamine and ATP through an activated phospho-Asp-tRNA(Asn) or phospho-Glu-tRNA(Gln). The chain is Aspartyl/glutamyl-tRNA(Asn/Gln) amidotransferase subunit C from Rickettsia typhi (strain ATCC VR-144 / Wilmington).